Here is a 47-residue protein sequence, read N- to C-terminus: Lysis protein for colicin E5 (47 aa).

Residues 1-19 form the signal peptide; that stretch reads MKKITWIILLLLAAIILAA. C20 is lipidated: N-palmitoyl cysteine. A lipid anchor (S-diacylglycerol cysteine) is attached at C20.

It is found in the cell outer membrane. In terms of biological role, lysis proteins are required for both colicin release and partial cell lysis. The protein is Lysis protein for colicin E5 (lys) of Escherichia coli.